Consider the following 265-residue polypeptide: Small ribosomal subunit protein uS2 (265 aa).

The protein belongs to the universal ribosomal protein uS2 family.

This is Small ribosomal subunit protein uS2 from Microcystis aeruginosa (strain NIES-843 / IAM M-2473).